Here is a 340-residue protein sequence, read N- to C-terminus: DNA-directed RNA polymerase subunit alpha (340 aa).

The segment at 1-233 is alpha N-terminal domain (alpha-NTD); it reads MYKNWRDLIR…EQLSIFINFD (233 aa). The segment at 246–340 is alpha C-terminal domain (alpha-CTD); it reads DEIDKINENL…RLRGEQNEEE (95 aa).

It belongs to the RNA polymerase alpha chain family. In terms of assembly, homodimer. The RNAP catalytic core consists of 2 alpha, 1 beta, 1 beta' and 1 omega subunit. When a sigma factor is associated with the core the holoenzyme is formed, which can initiate transcription.

It catalyses the reaction RNA(n) + a ribonucleoside 5'-triphosphate = RNA(n+1) + diphosphate. Its function is as follows. DNA-dependent RNA polymerase catalyzes the transcription of DNA into RNA using the four ribonucleoside triphosphates as substrates. The protein is DNA-directed RNA polymerase subunit alpha of Pelobacter propionicus (strain DSM 2379 / NBRC 103807 / OttBd1).